The primary structure comprises 578 residues: L-2,3-diaminopropanoate--citrate ligase (578 aa).

Belongs to the IucA/IucC family. As to quaternary structure, forms a mixture of monomer and dimer in solution.

The catalysed reaction is (S)-2,3-diaminopropanoate + citrate + ATP = 2-[(L-alanin-3-ylcarbamoyl)methyl]-2-hydroxybutanedioate + AMP + diphosphate. It participates in siderophore biosynthesis. Its function is as follows. Catalyzes the synthesis of citryl-L-2,3-diaminopropionic acid from L-2,3-diaminopropionic acid (L-Dap) and citrate, the first step in staphyloferrin B biosynthesis. This Staphylococcus aureus (strain NCTC 8325 / PS 47) protein is L-2,3-diaminopropanoate--citrate ligase.